The chain runs to 551 residues: Eukaryotic translation initiation factor 3 subunit D-2 (551 aa).

Residues 105–152 (NNVRARGRTGRGSQAVGGPGGPAAGGSTANSTKYGKGRNTRNTQNVGR) form a disordered region. Residues 119 to 128 (AVGGPGGPAA) are compositionally biased toward gly residues. The interval 290–304 (QFDLLTVNETSLEPP) is RNA gate.

It belongs to the eIF-3 subunit D family. As to quaternary structure, component of the eukaryotic translation initiation factor 3 (eIF-3) complex. The eIF-3 complex interacts with pix.

The protein resides in the cytoplasm. Functionally, mRNA cap-binding component of the eukaryotic translation initiation factor 3 (eIF-3) complex, which is involved in protein synthesis of a specialized repertoire of mRNAs and, together with other initiation factors, stimulates binding of mRNA and methionyl-tRNAi to the 40S ribosome. The eIF-3 complex specifically targets and initiates translation of a subset of mRNAs involved in cell proliferation. In the eIF-3 complex, eif3d specifically recognizes and binds the 7-methylguanosine cap of a subset of mRNAs. The polypeptide is Eukaryotic translation initiation factor 3 subunit D-2 (Drosophila erecta (Fruit fly)).